We begin with the raw amino-acid sequence, 406 residues long: Tubby-like F-box protein 11 (406 aa).

Positions 53-108 constitute an F-box domain; sequence SCWTQLPPELLREVLARVEESEGWWPRRRDVVACAGVCRSWRGIVREIVRTPEASG.

This sequence belongs to the TUB family. In terms of tissue distribution, ubiquitous.

The polypeptide is Tubby-like F-box protein 11 (TULP11) (Oryza sativa subsp. japonica (Rice)).